The following is a 542-amino-acid chain: Phenylacetone monooxygenase (542 aa).

FAD-binding positions include serine 27, glutamate 46, 54-57 (VWYW), aspartate 66, tyrosine 72, valine 119, and glutamine 152. 64-66 (RCD) is a binding site for NADP(+). Residues 194-200 (TGSSGIQ), 217-218 (RT), and 336-337 (KR) each bind NADP(+). Methionine 446 contacts FAD. Position 501 (tryptophan 501) interacts with NADP(+).

This sequence belongs to the FAD-binding monooxygenase family. In terms of assembly, monomer. FAD is required as a cofactor.

The catalysed reaction is phenylacetone + NADPH + O2 + H(+) = benzyl acetate + NADP(+) + H2O. Catalyzes a Baeyer-Villiger oxidation reaction, i.e. the insertion of an oxygen atom into a carbon-carbon bond adjacent to a carbonyl, which converts ketones to esters. Is most efficient with phenylacetone as substrate, leading to the formation of benzyl acetate. Can also oxidize other aromatic ketones (benzylacetone, alpha-methylphenylacetone and 4-hydroxyacetophenone), some aliphatic ketones (dodecan-2-one and bicyclohept-2-en-6-one) and sulfides (e.g. methyl 4-tolylsulfide). The chain is Phenylacetone monooxygenase (pamO) from Thermobifida fusca (strain YX).